The primary structure comprises 156 residues: 6,7-dimethyl-8-ribityllumazine synthase (156 aa).

5-amino-6-(D-ribitylamino)uracil contacts are provided by residues Phe-22, 57-59, and 81-83; these read AYE and SVI. 86–87 provides a ligand contact to (2S)-2-hydroxy-3-oxobutyl phosphate; the sequence is GT. The active-site Proton donor is the His-89. Phe-114 is a binding site for 5-amino-6-(D-ribitylamino)uracil. Arg-128 provides a ligand contact to (2S)-2-hydroxy-3-oxobutyl phosphate.

It belongs to the DMRL synthase family. In terms of assembly, forms an icosahedral capsid composed of 60 subunits, arranged as a dodecamer of pentamers.

It carries out the reaction (2S)-2-hydroxy-3-oxobutyl phosphate + 5-amino-6-(D-ribitylamino)uracil = 6,7-dimethyl-8-(1-D-ribityl)lumazine + phosphate + 2 H2O + H(+). Its pathway is cofactor biosynthesis; riboflavin biosynthesis; riboflavin from 2-hydroxy-3-oxobutyl phosphate and 5-amino-6-(D-ribitylamino)uracil: step 1/2. Catalyzes the formation of 6,7-dimethyl-8-ribityllumazine by condensation of 5-amino-6-(D-ribitylamino)uracil with 3,4-dihydroxy-2-butanone 4-phosphate. This is the penultimate step in the biosynthesis of riboflavin. In Photobacterium leiognathi, this protein is 6,7-dimethyl-8-ribityllumazine synthase.